The primary structure comprises 330 residues: Geranylgeranyl diphosphate synthase (330 aa).

Isopentenyl diphosphate contacts are provided by K43, R46, and H75. Mg(2+)-binding residues include D82 and D86. R91 contributes to the an all-trans-polyprenyl diphosphate binding site. Position 92 (R92) interacts with isopentenyl diphosphate. Residues K175, T176, Q213, K230, and K240 each contribute to the an all-trans-polyprenyl diphosphate site.

This sequence belongs to the FPP/GGPP synthase family. It depends on Mg(2+) as a cofactor.

The catalysed reaction is isopentenyl diphosphate + (2E,6E)-farnesyl diphosphate = (2E,6E,10E)-geranylgeranyl diphosphate + diphosphate. Its pathway is isoprenoid biosynthesis; geranylgeranyl diphosphate biosynthesis; geranylgeranyl diphosphate from farnesyl diphosphate and isopentenyl diphosphate: step 1/1. Functionally, catalyzes the condensation of isopentenyl pyrophosphate with the allylic pyrophosphates to yield geranylgeranyl diphosphate (GGPP) which is a precursor of the ether-linked lipids. It is able to use dimethylallyl diphosphate (DMAPP), geranyl diphosphate (GPP), and (all-E)-geranyl diphosphate (E-FPP) as an allylic substrate. The polypeptide is Geranylgeranyl diphosphate synthase (gds) (Sulfolobus acidocaldarius (strain ATCC 33909 / DSM 639 / JCM 8929 / NBRC 15157 / NCIMB 11770)).